The chain runs to 191 residues: HTH-type transcriptional regulator SAR0097 (191 aa).

The HTH tetR-type domain maps to 12–74 (AEYNQQIILT…AIMDKKVDQM (63 aa)). The segment at residues 37–56 (KMSDIAKISGVGVGTLYRHF) is a DNA-binding region (H-T-H motif).

This chain is HTH-type transcriptional regulator SAR0097, found in Staphylococcus aureus (strain MRSA252).